The chain runs to 360 residues: Peptide chain release factor 1 (360 aa).

Position 234 is an N5-methylglutamine (Gln-234). The segment at 285–305 (RAQGIAEDRKSQVGTGDRSER) is disordered.

Belongs to the prokaryotic/mitochondrial release factor family. Post-translationally, methylated by PrmC. Methylation increases the termination efficiency of RF1.

The protein localises to the cytoplasm. Its function is as follows. Peptide chain release factor 1 directs the termination of translation in response to the peptide chain termination codons UAG and UAA. This Clostridium beijerinckii (strain ATCC 51743 / NCIMB 8052) (Clostridium acetobutylicum) protein is Peptide chain release factor 1.